A 304-amino-acid chain; its full sequence is tRNA pseudouridine synthase B (304 aa).

Residue Asp-47 is the Nucleophile of the active site. A disordered region spans residues 85 to 105; the sequence is TNTDDGEGEVTETSDARPSDD.

Belongs to the pseudouridine synthase TruB family. Type 1 subfamily.

It catalyses the reaction uridine(55) in tRNA = pseudouridine(55) in tRNA. In terms of biological role, responsible for synthesis of pseudouridine from uracil-55 in the psi GC loop of transfer RNAs. The polypeptide is tRNA pseudouridine synthase B (Dinoroseobacter shibae (strain DSM 16493 / NCIMB 14021 / DFL 12)).